We begin with the raw amino-acid sequence, 102 residues long: NADH-quinone oxidoreductase subunit K (102 aa).

The next 3 membrane-spanning stretches (helical) occupy residues 6 to 26 (LEHG…GLMV), 30 to 50 (ILFV…AFVV), and 62 to 82 (VMFI…LAIL).

Belongs to the complex I subunit 4L family. NDH-1 is composed of 13 different subunits. Subunits NuoA, H, J, K, L, M, N constitute the membrane sector of the complex.

The protein localises to the cell inner membrane. It catalyses the reaction a quinone + NADH + 5 H(+)(in) = a quinol + NAD(+) + 4 H(+)(out). Its function is as follows. NDH-1 shuttles electrons from NADH, via FMN and iron-sulfur (Fe-S) centers, to quinones in the respiratory chain. The immediate electron acceptor for the enzyme in this species is believed to be ubiquinone. Couples the redox reaction to proton translocation (for every two electrons transferred, four hydrogen ions are translocated across the cytoplasmic membrane), and thus conserves the redox energy in a proton gradient. This Pseudomonas syringae pv. syringae (strain B728a) protein is NADH-quinone oxidoreductase subunit K.